The following is a 207-amino-acid chain: 8-oxoguanine DNA glycosylase/AP lyase (207 aa).

Active-site residues include Lys-129 and Asp-147.

It belongs to the type-2 OGG1 family.

It catalyses the reaction 2'-deoxyribonucleotide-(2'-deoxyribose 5'-phosphate)-2'-deoxyribonucleotide-DNA = a 3'-end 2'-deoxyribonucleotide-(2,3-dehydro-2,3-deoxyribose 5'-phosphate)-DNA + a 5'-end 5'-phospho-2'-deoxyribonucleoside-DNA + H(+). Its function is as follows. Catalyzes the excision of an oxidatively damaged form of guanine (7,8-dihydro-8-oxoguanine = 8-oxoG) from DNA. Also cleaves the DNA backbone at apurinic/apyrimidinic sites (AP sites). This is 8-oxoguanine DNA glycosylase/AP lyase from Thermotoga sp. (strain RQ2).